A 644-amino-acid polypeptide reads, in one-letter code: Ribonuclease R (644 aa).

Residues 211–529 (RINYSHIPFI…LHRLLKELLF (319 aa)) form the RNB domain. The 72-residue stretch at 573–644 (LEFLEKEFLG…ITERIKEHVS (72 aa)) folds into the S1 motif domain.

The protein belongs to the RNR ribonuclease family. RNase R subfamily.

The protein localises to the cytoplasm. It carries out the reaction Exonucleolytic cleavage in the 3'- to 5'-direction to yield nucleoside 5'-phosphates.. Its function is as follows. 3'-5' exoribonuclease that releases 5'-nucleoside monophosphates and is involved in maturation of structured RNAs. In Helicobacter pylori (strain J99 / ATCC 700824) (Campylobacter pylori J99), this protein is Ribonuclease R.